The primary structure comprises 364 residues: Long-wave-sensitive opsin 1 (364 aa).

The Extracellular segment spans residues 1-52 (MTQRWGPQRLAGGQPHAGLEDSTRASIFTYTNSNATRGPFEGPNYHIAPRWV). O-linked (GlcNAc) serine glycosylation occurs at Ser22. Asn34 carries N-linked (GlcNAc...) asparagine glycosylation. The helical transmembrane segment at 53–77 (YHVTSAWMIFVVIASVFTNGLVLAA) threads the bilayer. Over 78–89 (TMKFKKLRHPLN) the chain is Cytoplasmic. A helical transmembrane segment spans residues 90–115 (WILVNLAVADLAETIIASTISVVNQI). The Extracellular segment spans residues 116–129 (YGYFVLGHPMCVLE). Residues Cys126 and Cys203 are joined by a disulfide bond. Residues 130–149 (GYTVSLCGITGLWSLAIISW) traverse the membrane as a helical segment. Over 150-168 (ERWLVVCKPFGNVRFDAKL) the chain is Cytoplasmic. Residues 169–192 (AIAGIAFSWIWAAVWTAPPIFGWS) traverse the membrane as a helical segment. Residues 193 to 218 (RYWPHGLKTSCGPDVFSGSSYPGVQS) lie on the Extracellular side of the membrane. A helical transmembrane segment spans residues 219–246 (YMIVLMITCCIIPLSVIVLCYLQVWLAI). The Cytoplasmic portion of the chain corresponds to 247–268 (RAVAKQQKESESTQKAEKEVTR). Residues 269–292 (MVMVMIFAYCVCWGPYTFFACFAA) form a helical membrane-spanning segment. At 293–300 (AHPGYAFH) the chain is on the extracellular side. Residues 301–325 (PLVAALPAYFAKSATIYNPIIYVFM) form a helical membrane-spanning segment. Residue Lys312 is modified to N6-(retinylidene)lysine. Topologically, residues 326 to 364 (NRQFRNCIMQLFGKKVDDGSELSSASRTEASSVSSVSPA) are cytoplasmic.

This sequence belongs to the G-protein coupled receptor 1 family. Opsin subfamily. Phosphorylated on some or all of the serine and threonine residues present in the C-terminal region. As to expression, the three color pigments are found in the cone photoreceptor cells. Expressed in retina.

It localises to the membrane. Visual pigments are the light-absorbing molecules that mediate vision. They consist of an apoprotein, opsin, covalently linked to cis-retinal. The protein is Long-wave-sensitive opsin 1 (OPN1LW) of Felis catus (Cat).